We begin with the raw amino-acid sequence, 393 residues long: uncharacterized protein (393 aa).

4 residues coordinate [4Fe-4S] cluster: C72, C82, C85, and C160. S-adenosyl-L-methionine is bound by residues Q215, F245, E267, and D313. C340 serves as the catalytic Nucleophile.

This sequence belongs to the class I-like SAM-binding methyltransferase superfamily. RNA M5U methyltransferase family.

This is an uncharacterized protein from Nitrosomonas europaea (strain ATCC 19718 / CIP 103999 / KCTC 2705 / NBRC 14298).